A 132-amino-acid chain; its full sequence is Agouti-signaling protein (132 aa).

An N-terminal signal peptide occupies residues M1 to S22. An N-linked (GlcNAc...) asparagine glycan is attached at N39. A disordered region spans residues I62–C93. Over residues R64–K79 the composition is skewed to basic and acidic residues. Disulfide bonds link C93–C108, C100–C114, C107–C125, C111–C132, and C116–C123. The region spanning C93–C132 is the Agouti domain.

The protein localises to the secreted. In terms of biological role, involved in the regulation of melanogenesis. The binding of ASP to MC1R precludes alpha-MSH initiated signaling and thus blocks production of cAMP, leading to a down-regulation of eumelanogenesis (brown/black pigment) and thus increasing synthesis of pheomelanin (yellow/red pigment). This is Agouti-signaling protein (ASIP) from Leontopithecus chrysomelas (Golden-headed lion tamarin).